Consider the following 534-residue polypeptide: UDP-glucuronosyltransferase 1A5 (534 aa).

An N-terminal signal peptide occupies residues 1–28 (MATGLQVPLPQLATGLLLLLSVQPWAES). N-linked (GlcNAc...) asparagine glycosylation is found at Asn-119, Asn-296, and Asn-348. Residues 492–508 (VIGFLLAVVLTVAFITF) traverse the membrane as a helical segment.

Belongs to the UDP-glycosyltransferase family. Homodimer. Homooligomer. Interacts with UGT1A1, UGT1A3, UGT1A4, UGT1A6, UGT1A7, UGT1A8, UGT1A9 and UGT1A10 to form heterodimers. Isoform 1 interacts with isoform 2/i2 suggesting that oligomerization is involved in negative regulation of transferase activity by isoform 2. Isoform 1 also interacts with respective i2 isoforms of UGT1A1, UGT1A3, UGT1A4, UGT1A6, UGT1A7, UGT1A8, UGT1A9 and UGT1A10. Isoform 1 and isoform 2 are expressed in colon and small intestine. Neither isoform is expressed in liver, kidney or esophagus.

Its subcellular location is the endoplasmic reticulum membrane. The enzyme catalyses glucuronate acceptor + UDP-alpha-D-glucuronate = acceptor beta-D-glucuronoside + UDP + H(+). It carries out the reaction zolasartan + UDP-alpha-D-glucuronate = zolarsartan-1-N-beta-D-glucuronide + UDP. In terms of biological role, UDP-glucuronosyltransferase (UGT) that catalyzes phase II biotransformation reactions in which lipophilic substrates are conjugated with glucuronic acid to increase the metabolite's water solubility, thereby facilitating excretion into either the urine or bile. Essential for the elimination and detoxification of drugs, xenobiotics and endogenous compounds. Involved in the glucuronidation of the AGTR1 angiotensin receptor antagonist zolarsatan, a drug which can inhibit the effect of angiotensin II. Its function is as follows. Lacks UGT glucuronidation activity but acts as a negative regulator of isoform 1. The sequence is that of UDP-glucuronosyltransferase 1A5 from Homo sapiens (Human).